Consider the following 376-residue polypeptide: Chaperone protein DnaJ (376 aa).

Positions 5-70 (DYYEVLGLSK…QKKANYDQFG (66 aa)) constitute a J domain. The segment at 133–215 (GVEKEISITR…CHGKGTVRKN (83 aa)) adopts a CR-type zinc-finger fold. Residues Cys-146, Cys-149, Cys-163, Cys-166, Cys-189, Cys-192, Cys-203, and Cys-206 each coordinate Zn(2+). CXXCXGXG motif repeat units lie at residues 146-153 (CDTCAGSG), 163-170 (CDKCGGTG), 189-196 (CDKCGGSG), and 203-210 (CTTCHGKG).

Belongs to the DnaJ family. In terms of assembly, homodimer. Zn(2+) is required as a cofactor.

Its subcellular location is the cytoplasm. Functionally, participates actively in the response to hyperosmotic and heat shock by preventing the aggregation of stress-denatured proteins and by disaggregating proteins, also in an autonomous, DnaK-independent fashion. Unfolded proteins bind initially to DnaJ; upon interaction with the DnaJ-bound protein, DnaK hydrolyzes its bound ATP, resulting in the formation of a stable complex. GrpE releases ADP from DnaK; ATP binding to DnaK triggers the release of the substrate protein, thus completing the reaction cycle. Several rounds of ATP-dependent interactions between DnaJ, DnaK and GrpE are required for fully efficient folding. Also involved, together with DnaK and GrpE, in the DNA replication of plasmids through activation of initiation proteins. The sequence is that of Chaperone protein DnaJ from Clostridium novyi (strain NT).